Here is a 179-residue protein sequence, read N- to C-terminus: ATP-dependent protease subunit HslV (179 aa).

Residue threonine 6 is part of the active site. Na(+)-binding residues include serine 164, cysteine 167, and threonine 170.

Belongs to the peptidase T1B family. HslV subfamily. In terms of assembly, a double ring-shaped homohexamer of HslV is capped on each side by a ring-shaped HslU homohexamer. The assembly of the HslU/HslV complex is dependent on binding of ATP.

The protein resides in the cytoplasm. The enzyme catalyses ATP-dependent cleavage of peptide bonds with broad specificity.. Its activity is regulated as follows. Allosterically activated by HslU binding. Functionally, protease subunit of a proteasome-like degradation complex believed to be a general protein degrading machinery. This Listeria monocytogenes serotype 4b (strain CLIP80459) protein is ATP-dependent protease subunit HslV.